We begin with the raw amino-acid sequence, 72 residues long: uncharacterized protein (72 aa).

A coiled-coil region spans residues Tyr-27 to Val-55.

This is an uncharacterized protein from Schizosaccharomyces pombe (strain 972 / ATCC 24843) (Fission yeast).